A 79-amino-acid polypeptide reads, in one-letter code: Ferredoxin (79 aa).

4Fe-4S ferredoxin-type domains lie at 2–30 (PHVICEPCIGVKDQSCVEVCPVECIYDGG) and 31–60 (DQFYIHPEECIDCGACVPACPVNAIYPEED). [3Fe-4S] cluster-binding residues include Cys9 and Cys17. The [4Fe-4S] cluster site is built by Cys21, Cys40, Cys43, and Cys46. Cys50 contributes to the [3Fe-4S] cluster binding site.

The cofactor is [4Fe-4S] cluster. [3Fe-4S] cluster serves as cofactor.

In terms of biological role, ferredoxins are iron-sulfur proteins that transfer electrons in a wide variety of metabolic reactions. This chain is Ferredoxin, found in Thermus thermophilus (strain ATCC 27634 / DSM 579 / HB8).